We begin with the raw amino-acid sequence, 289 residues long: Survival motor neuron protein (289 aa).

Gly residues predominate over residues 1–10; the sequence is MAMGSGGGAG. Positions 1–27 are disordered; that stretch reads MAMGSGGGAGSEQEDTVLFRRGTGQSD. Residues 11–42 form a P1 (binding site for GEMIN2) region; sequence SEQEDTVLFRRGTGQSDDSDIWDDTALIKAYD. A Phosphothreonine modification is found at Thr23. A phosphoserine mark is found at Ser26 and Ser29. A Glycyl lysine isopeptide (Lys-Gly) (interchain with G-Cter in SUMO2) cross-link involves residue Lys49. The interval 55–88 is disordered; the sequence is GDMCETSDKPKGTARRKPAKKNKNQKKNATAPLK. Over residues 66–80 the composition is skewed to basic residues; it reads GTARRKPAKKNKNQK. At Thr67 the chain carries Phosphothreonine. One can recognise a Tudor domain in the interval 89–149; it reads QWKAGDKCSA…LSPTCEVANN (61 aa). Residues 95–205 form a required for interaction with RPP20/POP7 region; that stretch reads KCSAVWSEDG…VPGAGLGPGK (111 aa). The tract at residues 150–226 is disordered; that stretch reads TEQNTQENES…PPPPPPFLPC (77 aa). Basic residues predominate over residues 171–181; sequence RSLRSKAHSKS. Lys205 is covalently cross-linked (Glycyl lysine isopeptide (Lys-Gly) (interchain with G-Cter in SUMO2)). Residues 212 to 226 show a composition bias toward pro residues; the sequence is GPPPPPPPPPPFLPC. Residues 235-262 form a P2 (binding site for SM B) region; sequence PPIIPPPPPISPDCLDDTDALGSMLISW. The segment at 274–289 is required for interaction with SYNCRIP; that stretch reads GFRQNKKEGKKCSHTN.

This sequence belongs to the SMN family. As to quaternary structure, homooligomer; may form higher order homooligomers in the dimer to octamer range. Part of the core SMN complex that contains SMN1, GEMIN2/SIP1, DDX20/GEMIN3, GEMIN4, GEMIN5, GEMIN6, GEMIN7, GEMIN8 and STRAP/UNRIP. Part of the SMN-Sm complex that contains SMN1, GEMIN2/SIP1, DDX20/GEMIN3, GEMIN4, GEMIN5, GEMIN6, GEMIN7, GEMIN8, STRAP/UNRIP and the Sm proteins SNRPB, SNRPD1, SNRPD2, SNRPD3, SNRPE, SNRPF and SNRPG. Component of an import snRNP complex composed of KPNB1, RNUT1, SMN1 and ZNF259. Interacts with DDX20, FBL, NOLA1, RNUT1 and with several spliceosomal snRNP core Sm proteins, including SNRPB, SNRPD1, SNRPD2, SNRPD3, SNRPE and ILF3. Interacts with GEMIN2; the interaction is direct. Interacts with GEMIN3; the interaction is direct. Interacts with GEMIN8; the interaction is direct. Interacts with SNRPB; the interaction is direct. Interacts (via Tudor domain) with SNRPD1 (via C-terminus); the interaction is direct. Interacts with SNRPD2; the interaction is direct. Interacts (via Tudor domain) with SNRPD3 (via C-terminus); the interaction is direct. Interacts with SNRPE; the interaction is direct. Interacts with OSTF1, LSM10, LSM11 and RPP20/POP7. Interacts (via C-terminal region) with ZPR1 (via C-terminal region). Interacts (via Tudor domain) with COIL. Interacts with SETX; recruits SETX to POLR2A. Interacts with POLR2A (via the C-terminal domain (CTD)). Interacts with PRMT5. Interacts with XRN2. Interacts (via C-terminus) with FMR1 (via C-terminus); the interaction is direct and occurs in a RNA-independent manner. Interacts with SYNCRIP. Interacts (via Tudor domain) with SF3B2 (methylated form). Interacts with WRAP53/TCAB1. Interacts (via Tudor domain) with ELAVL4 in an RNA-independent manner; the interaction is required for localization of ELAVL4 to RNA granules. Interacts with FRG1.

The protein resides in the nucleus. It localises to the gem. It is found in the cajal body. The protein localises to the cytoplasm. Its subcellular location is the cytoplasmic granule. The protein resides in the perikaryon. It localises to the cell projection. It is found in the neuron projection. The protein localises to the axon. Its subcellular location is the myofibril. The protein resides in the sarcomere. It localises to the z line. The SMN complex catalyzes the assembly of small nuclear ribonucleoproteins (snRNPs), the building blocks of the spliceosome, and thereby plays an important role in the splicing of cellular pre-mRNAs. Most spliceosomal snRNPs contain a common set of Sm proteins SNRPB, SNRPD1, SNRPD2, SNRPD3, SNRPE, SNRPF and SNRPG that assemble in a heptameric protein ring on the Sm site of the small nuclear RNA to form the core snRNP (Sm core). In the cytosol, the Sm proteins SNRPD1, SNRPD2, SNRPE, SNRPF and SNRPG are trapped in an inactive 6S pICln-Sm complex by the chaperone CLNS1A that controls the assembly of the core snRNP. To assemble core snRNPs, the SMN complex accepts the trapped 5Sm proteins from CLNS1A forming an intermediate. Binding of snRNA inside 5Sm ultimately triggers eviction of the SMN complex, thereby allowing binding of SNRPD3 and SNRPB to complete assembly of the core snRNP. Within the SMN complex, SMN1 acts as a structural backbone and together with GEMIN2 it gathers the Sm complex subunits. Ensures the correct splicing of U12 intron-containing genes that may be important for normal motor and proprioceptive neurons development. Also required for resolving RNA-DNA hybrids created by RNA polymerase II, that form R-loop in transcription terminal regions, an important step in proper transcription termination. May also play a role in the metabolism of small nucleolar ribonucleoprotein (snoRNPs). The sequence is that of Survival motor neuron protein (Smn1) from Rattus norvegicus (Rat).